The sequence spans 416 residues: Histone acetyltransferase type B catalytic subunit (416 aa).

Residue Ala-2 is modified to N-acetylalanine. N6-acetyllysine is present on residues Lys-6 and Lys-12. The interval 59–61 is interaction with histone H4 N-terminus; the sequence is DDE. Ser-187 carries the phosphoserine modification. The tract at residues 222–224 is interaction with histone H4 N-terminus; that stretch reads YNY. Residues 238-240 and 245-251 each bind acetyl-CoA; these read MLI and QGQGHGA. The active-site Proton donor/acceptor is Glu-273. Phosphoserine is present on Ser-340.

It belongs to the HAT1 family. In terms of assembly, catalytic subunit of the type B histone acetyltransferase (HAT) complex, composed of RBBP7 and HAT1. Interacts with histones H4 and H2A. The interaction is dependent of the ability of RBBP7 to bind to the N-terminus of histones. Component of the histone H3.1 and H3.3 complexes. Post-translationally, phosphorylated by AMPK at Ser-187; phosphorylation increases HAT1 activity.

It is found in the nucleus matrix. Its subcellular location is the mitochondrion. The enzyme catalyses L-lysyl-[protein] + acetyl-CoA = N(6)-acetyl-L-lysyl-[protein] + CoA + H(+). Histone acetyltransferase that plays a role in different biological processes including cell cycle progression, glucose metabolism, histone production or DNA damage repair. Coordinates histone production and acetylation via H4 promoter binding. Acetylates histone H4 at 'Lys-5' (H4K5ac) and 'Lys-12' (H4K12ac) and, to a lesser extent, histone H2A at 'Lys-5' (H2AK5ac). Drives H4 production by chromatin binding to support chromatin replication and acetylation. Since transcription of H4 genes is tightly coupled to S-phase, plays an important role in S-phase entry and progression. Promotes homologous recombination in DNA repair by facilitating histone turnover and incorporation of acetylated H3.3 at sites of double-strand breaks. In addition, acetylates other substrates such as chromatin-related proteins. Also acetylates RSAD2 which mediates the interaction of ubiquitin ligase UBE4A with RSAD2 leading to RSAD2 ubiquitination and subsequent degradation. The chain is Histone acetyltransferase type B catalytic subunit (Hat1) from Mus musculus (Mouse).